A 494-amino-acid polypeptide reads, in one-letter code: Transcription termination factor MTERF4, chloroplastic (494 aa).

A chloroplast-targeting transit peptide spans 1–54 (MMKSLLFSAHPTSLLLPAPRLRRLLRLRAASSASASAPPRADRRSPGTPSRRPS). Disordered regions lie at residues 32 to 61 (SASA…YARP) and 457 to 494 (VEEM…EFVR). Residues 46-56 (PGTPSRRPSSS) are compositionally biased toward low complexity. Acidic residues-rich tracts occupy residues 457–466 (VEEMEREDSS) and 473–494 (DEVE…EFVR).

This sequence belongs to the mTERF family.

It localises to the plastid. Its subcellular location is the chloroplast stroma. Transcription termination factor required for processing and steady-state levels of plastid transcripts. Required for splicing of the chloroplastic group II intron. Required for the accumulation of 16S and 23S ribosomes. This is Transcription termination factor MTERF4, chloroplastic from Zea mays (Maize).